A 192-amino-acid polypeptide reads, in one-letter code: GTP cyclohydrolase 1 (192 aa).

3 residues coordinate Zn(2+): cysteine 81, histidine 84, and cysteine 153.

The protein belongs to the GTP cyclohydrolase I family. In terms of assembly, toroid-shaped homodecamer, composed of two pentamers of five dimers.

The catalysed reaction is GTP + H2O = 7,8-dihydroneopterin 3'-triphosphate + formate + H(+). It participates in cofactor biosynthesis; 7,8-dihydroneopterin triphosphate biosynthesis; 7,8-dihydroneopterin triphosphate from GTP: step 1/1. This is GTP cyclohydrolase 1 from Streptococcus mutans serotype c (strain ATCC 700610 / UA159).